The sequence spans 726 residues: Myb-like protein Z (726 aa).

Disordered regions lie at residues 15 to 109 (DSND…SLSN), 124 to 149 (ASPS…YHPY), 161 to 239 (HYVS…TKQQ), and 272 to 303 (LIPS…NMRS). Residues 18-39 (DNNNNNNNNNNSNNNNNNNNNN) show a composition bias toward low complexity. Residues 45–80 (SSATSSPTGQDSTIDRPNSPSSSIKFTYPSKNSIVT) are compositionally biased toward polar residues. The span at 81-108 (SPSSLQLPSPSFSSSSSSSSSSSSSSLS) shows a compositional bias: low complexity. Residues 124 to 147 (ASPSKSSENSPTIHTSSLSPNSYH) are compositionally biased toward polar residues. The segment covering 165-177 (NNNNNNNNNNNNN) has biased composition (low complexity). The span at 183–209 (SSELYNTSPSISSKTTPNGSSTNNSPF) shows a compositional bias: polar residues. Low complexity predominate over residues 221–239 (NNNNNNNNDRNENNTTKQQ). A Myb-like domain is found at 329 to 388 (IPIATRKLWSQEECCRLLEMVFQRDPQSVTSKESELRWRSIASTLGRTVTSTRKKYMRLM). Over residues 516 to 651 (KQIQQQQKQK…NNNYRSSLSP (136 aa)) the composition is skewed to low complexity. Positions 516 to 726 (KQIQQQQKQK…NNNNYNNYHN (211 aa)) are disordered. Over residues 661–675 (QSPQQKSNNENQQNF) the composition is skewed to polar residues. Positions 709-726 (NLNNNNNNNNNNYNNYHN) are enriched in low complexity.

This is Myb-like protein Z (mybZ) from Dictyostelium discoideum (Social amoeba).